The following is a 286-amino-acid chain: Pyridoxal kinase PdxY (286 aa).

Substrate contacts are provided by residues serine 9 and 44–45; that span reads TQ. ATP-binding positions include aspartate 111, alanine 143, glutamate 148, lysine 181, and 208–211; that span reads RPLV. Aspartate 223 is a substrate binding site.

Belongs to the pyridoxine kinase family. PdxY subfamily. As to quaternary structure, homodimer. Mg(2+) serves as cofactor.

The enzyme catalyses pyridoxal + ATP = pyridoxal 5'-phosphate + ADP + H(+). It functions in the pathway cofactor metabolism; pyridoxal 5'-phosphate salvage; pyridoxal 5'-phosphate from pyridoxal: step 1/1. Its function is as follows. Pyridoxal kinase involved in the salvage pathway of pyridoxal 5'-phosphate (PLP). Catalyzes the phosphorylation of pyridoxal to PLP. The polypeptide is Pyridoxal kinase PdxY (Yersinia pseudotuberculosis serotype I (strain IP32953)).